Reading from the N-terminus, the 421-residue chain is Peroxisomal succinyl-coenzyme A thioesterase (421 aa).

Serine 232 acts as the Charge relay system in catalysis. Lysine 313 is subject to N6-succinyllysine. Catalysis depends on charge relay system residues aspartate 326 and histidine 360. The short motif at cysteine 419–leucine 421 is the Microbody targeting signal element.

The protein belongs to the C/M/P thioester hydrolase family. As to expression, mainly expressed in liver and kidney. Weakly expressed in other tissues including intestine, adrenal gland and adipose tissues.

Its subcellular location is the peroxisome. It catalyses the reaction succinyl-CoA + H2O = succinate + CoA + H(+). The enzyme catalyses glutaryl-CoA + H2O = glutarate + CoA + H(+). Its pathway is lipid metabolism; fatty acid metabolism. Functionally, catalyzes the hydrolysis of acyl-CoAs into free fatty acids and coenzyme A (CoASH), regulating their respective intracellular levels. In contrast to its human ortholog, functions essentially as a succinyl-CoA thioesterase with no activity with medium to long chain saturated acyl-CoAs and with a low activity toward glutaryl-CoA. This Mus musculus (Mouse) protein is Peroxisomal succinyl-coenzyme A thioesterase (Acot4).